Here is a 471-residue protein sequence, read N- to C-terminus: 7-dehydrocholesterol reductase (471 aa).

8 consecutive transmembrane segments (helical) span residues 36 to 56 (LVSV…FIMA), 95 to 115 (LYAL…DFCH), 144 to 164 (LQAW…LSWF), 173 to 193 (WIPL…FAMI), 233 to 253 (LFFN…SFAA), 262 to 282 (VTNS…DFFW), 302 to 322 (LGWG…LYLV), and 327 to 347 (QLST…YYIF). Residues Lys354, Arg358, Leu391, Trp396, and 403 to 404 (NY) each bind NADP(+). The helical transmembrane segment at 416–436 (LACGGGHLLPYFYIIYMTILL) threads the bilayer. NADP(+) is bound by residues Asp443, 447–451 (CANKY), and Tyr458.

The protein belongs to the ERG4/ERG24 family. In terms of assembly, interacts with DHCR24; this interaction regulates DHCR7 activity. Interacts with TMEM147. Highest expression is detected in liver, followed by kidney and brain.

The protein localises to the endoplasmic reticulum membrane. The enzyme catalyses cholesterol + NADP(+) = 7-dehydrocholesterol + NADPH + H(+). It catalyses the reaction 7-dehydrodesmosterol + NADPH + H(+) = desmosterol + NADP(+). It carries out the reaction 5,6alpha-epoxy-5alpha-cholestan-3beta-ol + H2O = 5alpha-cholestane-3beta,5,6beta-triol. The catalysed reaction is 5,6beta-epoxy-5beta-cholestan-3beta-ol + H2O = 5alpha-cholestane-3beta,5,6beta-triol. It functions in the pathway steroid biosynthesis; cholesterol biosynthesis. Its function is as follows. Oxidoreductase that catalyzes the last step of the cholesterol synthesis pathway, which transforms cholesta-5,7-dien-3beta-ol (7-dehydrocholesterol,7-DHC) into cholesterol by reducing the C7-C8 double bond of its sterol core. Can also metabolize cholesta-5,7,24-trien-3beta-ol (7-dehydrodemosterol, 7-DHD) to desmosterol, which is then metabolized by the Delta(24)-sterol reductase (DHCR24) to cholesterol. Modulates ferroptosis (a form of regulated cell death driven by iron-dependent lipid peroxidation) through the metabolic breakdown of the anti-ferroptotic metabolites 7-DHC and 7-DHD which, when accumulated, divert the propagation of peroxyl radical-mediated damage from phospholipid components to its sterol core, protecting plasma and mitochondrial membranes from phospholipid autoxidation. Functionally, component of the microsomal antiestrogen binding site (AEBS), a multiproteic complex at the ER membrane that consists of an association between cholestenol Delta-isomerase/EBP and DHCR7. This complex is responsible for cholesterol-5,6-epoxide hydrolase (ChEH) activity, which consists in the hydration of cholesterol-5,6-epoxides (5,6-EC) into cholestane-3beta,5alpha,6beta-triol (CT). The precise role of each component of this complex has not been described yet. The sequence is that of 7-dehydrocholesterol reductase (Dhcr7) from Rattus norvegicus (Rat).